Reading from the N-terminus, the 481-residue chain is Probable myosin light chain kinase DDB_G0284661 (481 aa).

One can recognise a Protein kinase domain in the interval Tyr13–Ile269. Residues Ile19 to Val27 and Lys43 contribute to the ATP site. The Proton acceptor role is filled by Asp136. 2 disordered regions span residues Pro285–Lys315 and Ser345–Glu427. Positions Ser379–Phe421 are enriched in low complexity.

The protein belongs to the protein kinase superfamily. CAMK Ser/Thr protein kinase family. CaMK subfamily.

It catalyses the reaction L-seryl-[myosin light chain] + ATP = O-phospho-L-seryl-[myosin light chain] + ADP + H(+). It carries out the reaction L-threonyl-[myosin light chain] + ATP = O-phospho-L-threonyl-[myosin light chain] + ADP + H(+). Its activity is regulated as follows. Does not have a calmodulin-binding domain. In terms of biological role, may phosphorylate a specific serine in the N-terminus of a myosin light chain. This chain is Probable myosin light chain kinase DDB_G0284661, found in Dictyostelium discoideum (Social amoeba).